Here is a 537-residue protein sequence, read N- to C-terminus: MRFLILVLAGSIGIYGVNLPKIPKLSDLVNPFQQFKLKDILSTLTALDTPDIAADSAGVSLPKHEYTDRLSSISDLNRSKRDLLFQGDIHLSFEHLSNIVREQLDHSRTKRTAFRNAMYPKTIWLPNVPFELHGSLSAKSRSSLVAAMAFWEKHTCVAFKKRTSEKVYLLMSGQEEGCWSTVGRDEAQGAQILNIGTGCEMFGITSHEIAHALGLFHEQSRYDRDNYVQIVKSRIAQTNFYDFAVVGKKNMETYGQKYDIGSVMHYRPTEFSLDGGNSIIAKDVNMQNTMGQFRGPSFIDVAKINRHYNCEKNCKNKITCLNGGYQHPKNCKICVCPPGYGGSDCKGIEASSPAKCTGVLVAGETQRKFTANIKPNKNAKGIRKCNYHIEAPPGKRIVIIVDSVIGNCVQGCYEEGVELKMYEDKTVTGARFCCKLQKPQTLISQGNTVPLMLVAGKAQAFVQLRYSTVDGPQNRSPKDGNATSIGVNPFLLEKYQDNSIDSEAIRKEYHIQSDNVNQEDFETLVRSEFIDENTADI.

The signal sequence occupies residues 1 to 16 (MRFLILVLAGSIGIYG). Positions 17-111 (VNLPKIPKLS…EQLDHSRTKR (95 aa)) are excised as a propeptide. An N-linked (GlcNAc...) asparagine glycan is attached at asparagine 77. The Peptidase M12A domain maps to 116 to 311 (NAMYPKTIWL…AKINRHYNCE (196 aa)). Disulfide bonds link cysteine 156-cysteine 310, cysteine 178-cysteine 199, cysteine 314-cysteine 334, cysteine 336-cysteine 345, cysteine 356-cysteine 385, and cysteine 412-cysteine 433. Residue histidine 207 participates in Zn(2+) binding. Glutamate 208 is a catalytic residue. Zn(2+) contacts are provided by histidine 211 and histidine 217. An EGF-like domain is found at 306 to 346 (RHYNCEKNCKNKITCLNGGYQHPKNCKICVCPPGYGGSDCK). The 116-residue stretch at 356–471 (CTGVLVAGET…VQLRYSTVDG (116 aa)) folds into the CUB domain. Asparagine 481 carries an N-linked (GlcNAc...) asparagine glycan.

The cofactor is Zn(2+). In terms of tissue distribution, expressed in the hypodermis, rectum and to a lesser extent in pharyngeal muscles and intestine.

The protein localises to the secreted. Functionally, metalloprotease. The chain is Zinc metalloproteinase nas-23 (nas-23) from Caenorhabditis elegans.